Reading from the N-terminus, the 400-residue chain is Sphingosine 1-phosphate receptor 5 (400 aa).

The Extracellular portion of the chain corresponds to 1 to 41; sequence MEPGLLRPAPVSEVIVLHYNYTGKLRGARYQPGAGLRADAA. Residue Asn20 is glycosylated (N-linked (GlcNAc...) asparagine). Residues 42 to 62 form a helical membrane-spanning segment; the sequence is VCLAVCAFIVLENLAVLLVLV. At 63 to 68 the chain is on the cytoplasmic side; it reads RHPRFH. Residues 69-89 traverse the membrane as a helical segment; the sequence is APMFLLLGSLTLSDLLAGAAY. At 90-111 the chain is on the extracellular side; that stretch reads ATNILLSGPLTLRLSPALWFAR. The chain crosses the membrane as a helical span at residues 112–132; sequence EGGVFVALAASVLSLLAIALE. The Cytoplasmic segment spans residues 133-151; sequence RHLTMARRGPAPAASRART. Residues 152–172 traverse the membrane as a helical segment; that stretch reads LAMAVAAWGASLLLGLLPALG. The Extracellular segment spans residues 173–192; sequence WNCLGRLETCSTVLPLYAKA. Residues 193–213 form a helical membrane-spanning segment; sequence YVLFCVLAFLGILAAICALYA. Residues 214 to 253 are Cytoplasmic-facing; it reads RIYCQVRANARRLRAGPGSRRATSSSRSRHTPRSLALLRT. A helical transmembrane segment spans residues 254-274; that stretch reads LSVVLLAFVACWGPLFLLLLL. Residues 275–288 are Extracellular-facing; it reads DVACPARACPVLLQ. Residues 289 to 309 form a helical membrane-spanning segment; it reads ADPFLGLAMANSLLNPIIYTF. Over 310-400 the chain is Cytoplasmic; that stretch reads TNRDLRHALL…NRSLVPTATD (91 aa). The S-palmitoyl cysteine moiety is linked to residue Cys324. A disordered region spans residues 331–400; sequence QDSSNSLQRS…NRSLVPTATD (70 aa). A phosphoserine mark is found at Ser340, Ser342, and Ser384. Over residues 360-400 the composition is skewed to polar residues; it reads DRSSSPSEHLSPQQDGVDTSCSTGSPGVATANRSLVPTATD.

This sequence belongs to the G-protein coupled receptor 1 family. Expressed in spleen and brain. In the CNS expression is restricted to oligodendrocytes.

It localises to the cell membrane. Receptor for the lysosphingolipid sphingosine 1-phosphate (S1P). S1P is a bioactive lysophospholipid that elicits diverse physiological effect on most types of cells and tissues. Is coupled to both the G(i/0)alpha and G(12) subclass of heteromeric G-proteins. S1P activation on oligodendroglial cells modulates two distinct functional pathways mediating either process retraction or cell survival. S1P activation on O4-positive pre-oligodendrocytes induces process retraction via a Rho kinase/collapsin response-mediated protein signaling pathway. The S1P-induced survival of mature oligodendrocytes is mediated through a pertussis toxin-sensitive, Akt-dependent pathway. S1P activation on oligodendroglial cells modulates two distinct functional pathways mediating either process retraction or cell survival. These effects depend on the developmental stage of the cell. This Mus musculus (Mouse) protein is Sphingosine 1-phosphate receptor 5 (S1pr5).